Here is a 372-residue protein sequence, read N- to C-terminus: UDP-N-acetylglucosamine--N-acetylmuramyl-(pentapeptide) pyrophosphoryl-undecaprenol N-acetylglucosamine transferase (372 aa).

UDP-N-acetyl-alpha-D-glucosamine contacts are provided by residues 15–17 (TGG), Asn-126, Arg-169, Ser-197, and Gln-299.

This sequence belongs to the glycosyltransferase 28 family. MurG subfamily.

The protein resides in the cell inner membrane. It carries out the reaction di-trans,octa-cis-undecaprenyl diphospho-N-acetyl-alpha-D-muramoyl-L-alanyl-D-glutamyl-meso-2,6-diaminopimeloyl-D-alanyl-D-alanine + UDP-N-acetyl-alpha-D-glucosamine = di-trans,octa-cis-undecaprenyl diphospho-[N-acetyl-alpha-D-glucosaminyl-(1-&gt;4)]-N-acetyl-alpha-D-muramoyl-L-alanyl-D-glutamyl-meso-2,6-diaminopimeloyl-D-alanyl-D-alanine + UDP + H(+). It participates in cell wall biogenesis; peptidoglycan biosynthesis. Functionally, cell wall formation. Catalyzes the transfer of a GlcNAc subunit on undecaprenyl-pyrophosphoryl-MurNAc-pentapeptide (lipid intermediate I) to form undecaprenyl-pyrophosphoryl-MurNAc-(pentapeptide)GlcNAc (lipid intermediate II). This Methylobacterium sp. (strain 4-46) protein is UDP-N-acetylglucosamine--N-acetylmuramyl-(pentapeptide) pyrophosphoryl-undecaprenol N-acetylglucosamine transferase.